The chain runs to 152 residues: Large ribosomal subunit protein bL9 (152 aa).

This sequence belongs to the bacterial ribosomal protein bL9 family.

Functionally, binds to the 23S rRNA. The protein is Large ribosomal subunit protein bL9 of Synechococcus sp. (strain CC9902).